A 165-amino-acid polypeptide reads, in one-letter code: Thiol peroxidase (165 aa).

The 147-residue stretch at 18–164 (RKVGDKAPNF…YEAAIEAAKK (147 aa)) folds into the Thioredoxin domain. Catalysis depends on C60, which acts as the Cysteine sulfenic acid (-SOH) intermediate. An intrachain disulfide couples C60 to C94.

The protein belongs to the peroxiredoxin family. Tpx subfamily. In terms of assembly, homodimer.

It catalyses the reaction a hydroperoxide + [thioredoxin]-dithiol = an alcohol + [thioredoxin]-disulfide + H2O. In terms of biological role, thiol-specific peroxidase that catalyzes the reduction of hydrogen peroxide and organic hydroperoxides to water and alcohols, respectively. Plays a role in cell protection against oxidative stress by detoxifying peroxides. This is Thiol peroxidase from Listeria monocytogenes serovar 1/2a (strain ATCC BAA-679 / EGD-e).